The sequence spans 702 residues: uncharacterized protein (702 aa).

Low complexity-rich tracts occupy residues 306–384 (NNNN…NNNN), 488–511 (PTKTTTSSNNSRNTSPTSSTTNIT), 559–590 (QQSQQQQQQQQQQQQQQQESNFYSNNNNNNNN), 603–612 (SNQNSNNNNQ), and 621–639 (NNNNNNTNSNNSNNNNNNN). Disordered regions lie at residues 306–385 (NNNN…NNNE), 488–513 (PTKTTTSSNNSRNTSPTSSTTNITYG), and 551–645 (STMN…NSRY). In terms of domain architecture, VPS9 spans 337 to 489 (NNINNNINNN…IKSLDILSPT (153 aa)).

This is an uncharacterized protein from Dictyostelium discoideum (Social amoeba).